The chain runs to 325 residues: UPF0285 protein MmarC6_0247 (325 aa).

It belongs to the UPF0285 family.

The sequence is that of UPF0285 protein MmarC6_0247 from Methanococcus maripaludis (strain C6 / ATCC BAA-1332).